The following is a 517-amino-acid chain: MVLSDKELFAINKKAVEQGFNVKPRLNYNTVSGVNGPLVILEKVKFPRYNEIVNLTLPDGTVRQGQVLEIRGDRAIVQVFEGTSGIDVKKTTVEFTGESLRIPVSEDMLGRIFDGSGRPIDNGPKVFAEDYLDINGSPINPYARIYPEEMISTGVSAIDTMNSIARGQKIPIFSASGLPHNEIAAQICRQAGLVRPTKDVHDGHEENFSIVFAAMGVNLETARFFKQDFEENGSLERTSLFLNLANDPTIERIITPRLALTTAEYLAYQTERHVLTILTDMSSYADALREVSAAREEVPGRRGYPGYMYTDLSTIYERAGRVEGRNGSITQIPILTMPNDDITHPIPDLTGYITEGQIFVDRQLHNKGIYPPINVLPSLSRLMKSAIGEGMTRKDHGDVSNQLYAKYAIGKDAAAMKAVVGEEALSIEDKLSLEFLEKFEKTFITQGAYEDRTVFESLDQAWSLLRIYPKEMLNRISPKILDEFYDRARDDADEDEEDPDTRSSGKKKDASQEESLI.

Phosphoserine is present on serine 4. Lysine 14 is covalently cross-linked (Glycyl lysine isopeptide (Lys-Gly) (interchain with G-Cter in ubiquitin)). A Phosphoserine modification is found at serine 137. Residue arginine 381 participates in ATP binding. A disordered region spans residues 487 to 517 (RARDDADEDEEDPDTRSSGKKKDASQEESLI). Positions 500–511 (DTRSSGKKKDAS) are enriched in basic and acidic residues. 2 positions are modified to phosphoserine: serine 503 and serine 504. Lysine 508 is covalently cross-linked (Glycyl lysine isopeptide (Lys-Gly) (interchain with G-Cter in ubiquitin)). Residue serine 511 is modified to Phosphoserine; by ATM or ATR. Phosphoserine is present on serine 515.

It belongs to the ATPase alpha/beta chains family. V-ATPase is a heteromultimeric enzyme composed of a peripheral catalytic V1 complex (components A to H) attached to an integral membrane V0 proton pore complex (components: a, c, c', c'', d, e, f and VOA1). Interacts with RAV1 and RAV2 components of the RAVE complex, which are essential for the stability and assembly of V-ATPase.

It is found in the vacuole membrane. Its function is as follows. Non-catalytic subunit of the V1 complex of vacuolar(H+)-ATPase (V-ATPase), a multisubunit enzyme composed of a peripheral complex (V1) that hydrolyzes ATP and a membrane integral complex (V0) that translocates protons. V-ATPase is responsible for acidifying and maintaining the pH of intracellular compartments. This Saccharomyces cerevisiae (strain ATCC 204508 / S288c) (Baker's yeast) protein is V-type proton ATPase subunit B (VMA2).